We begin with the raw amino-acid sequence, 450 residues long: Exodeoxyribonuclease 7 large subunit (450 aa).

It belongs to the XseA family. As to quaternary structure, heterooligomer composed of large and small subunits.

It is found in the cytoplasm. It catalyses the reaction Exonucleolytic cleavage in either 5'- to 3'- or 3'- to 5'-direction to yield nucleoside 5'-phosphates.. Its function is as follows. Bidirectionally degrades single-stranded DNA into large acid-insoluble oligonucleotides, which are then degraded further into small acid-soluble oligonucleotides. This is Exodeoxyribonuclease 7 large subunit from Listeria innocua serovar 6a (strain ATCC BAA-680 / CLIP 11262).